Consider the following 201-residue polypeptide: Endoribonuclease YbeY (201 aa).

Residues His-156, His-160, and His-166 each coordinate Zn(2+).

It belongs to the endoribonuclease YbeY family. It depends on Zn(2+) as a cofactor.

The protein resides in the cytoplasm. In terms of biological role, single strand-specific metallo-endoribonuclease involved in late-stage 70S ribosome quality control and in maturation of the 3' terminus of the 16S rRNA. The chain is Endoribonuclease YbeY from Cupriavidus pinatubonensis (strain JMP 134 / LMG 1197) (Cupriavidus necator (strain JMP 134)).